The following is a 446-amino-acid chain: Phosphoglucosamine mutase (446 aa).

Catalysis depends on Ser100, which acts as the Phosphoserine intermediate. The Mg(2+) site is built by Ser100, Asp239, Asp241, and Asp243. The residue at position 100 (Ser100) is a Phosphoserine.

Belongs to the phosphohexose mutase family. The cofactor is Mg(2+). Post-translationally, activated by phosphorylation.

It catalyses the reaction alpha-D-glucosamine 1-phosphate = D-glucosamine 6-phosphate. Functionally, catalyzes the conversion of glucosamine-6-phosphate to glucosamine-1-phosphate. The chain is Phosphoglucosamine mutase from Shouchella clausii (strain KSM-K16) (Alkalihalobacillus clausii).